Reading from the N-terminus, the 149-residue chain is Vesicle-associated protein 3-1 (149 aa).

An N-acetylmethionine modification is found at Met-1. Position 2 is an N-acetylserine; in Vesicle-associated protein 3-1, N-terminally processed (Ser-2). Residues 6–126 (LLEIEPMYLQ…EETKLRVTYV (121 aa)) form the MSP domain.

The protein belongs to the VAMP-associated protein (VAP) (TC 9.B.17) family.

In terms of biological role, may play a role in vesicle trafficking. In Arabidopsis thaliana (Mouse-ear cress), this protein is Vesicle-associated protein 3-1 (PVA31).